Consider the following 55-residue polypeptide: Large ribosomal subunit protein bL33 (55 aa).

It belongs to the bacterial ribosomal protein bL33 family.

The protein is Large ribosomal subunit protein bL33 of Mesorhizobium japonicum (strain LMG 29417 / CECT 9101 / MAFF 303099) (Mesorhizobium loti (strain MAFF 303099)).